The chain runs to 180 residues: ATP synthase subunit delta (180 aa).

Belongs to the ATPase delta chain family. In terms of assembly, F-type ATPases have 2 components, F(1) - the catalytic core - and F(0) - the membrane proton channel. F(1) has five subunits: alpha(3), beta(3), gamma(1), delta(1), epsilon(1). F(0) has three main subunits: a(1), b(2) and c(10-14). The alpha and beta chains form an alternating ring which encloses part of the gamma chain. F(1) is attached to F(0) by a central stalk formed by the gamma and epsilon chains, while a peripheral stalk is formed by the delta and b chains.

The protein resides in the cell membrane. Functionally, f(1)F(0) ATP synthase produces ATP from ADP in the presence of a proton or sodium gradient. F-type ATPases consist of two structural domains, F(1) containing the extramembraneous catalytic core and F(0) containing the membrane proton channel, linked together by a central stalk and a peripheral stalk. During catalysis, ATP synthesis in the catalytic domain of F(1) is coupled via a rotary mechanism of the central stalk subunits to proton translocation. In terms of biological role, this protein is part of the stalk that links CF(0) to CF(1). It either transmits conformational changes from CF(0) to CF(1) or is implicated in proton conduction. The chain is ATP synthase subunit delta from Caldicellulosiruptor bescii (strain ATCC BAA-1888 / DSM 6725 / KCTC 15123 / Z-1320) (Anaerocellum thermophilum).